A 622-amino-acid polypeptide reads, in one-letter code: Probable ATP-citrate synthase (622 aa).

Residues 228–248 (ALRYEKLPEVQMIVILGELGG) and 279–305 (FPTEVQFGHAGAKSGGETESADAKNKA) each bind ATP. E245 provides a ligand contact to Mg(2+). H287 acts as the Tele-phosphohistidine intermediate in catalysis. 306–316 (LREAGAVVPTS) lines the CoA pocket.

This sequence in the N-terminal section; belongs to the succinate/malate CoA ligase beta subunit family. The protein in the C-terminal section; belongs to the succinate/malate CoA ligase alpha subunit family. Homotetramer.

Its subcellular location is the cytoplasm. The enzyme catalyses oxaloacetate + acetyl-CoA + ADP + phosphate = citrate + ATP + CoA. Functionally, catalyzes the cleavage of citrate into oxaloacetate and acetyl-CoA, the latter serving as common substrate in multiple biochemical reactions in protein, carbohydrate and lipid metabolism. The sequence is that of Probable ATP-citrate synthase (acly) from Dictyostelium discoideum (Social amoeba).